An 89-amino-acid polypeptide reads, in one-letter code: Dynein light chain 1, cytoplasmic (89 aa).

Belongs to the dynein light chain family. As to quaternary structure, interacts with mett-10; the interaction is direct, and is required for the nuclear localization of mett-10. Component of a dynein-regulating complex composed of at least bicd-1, dlc-1 and egal-1. Interacts with egal-1 and unc-83. Interacts with fbf-2. Broadly expressed in tissues including the intestine, body wall muscles, germs cells, oocytes, the rectal valve and cells in the head.

The protein resides in the cytoplasm. It is found in the cytoskeleton. It localises to the nucleus envelope. The protein localises to the cytoplasmic granule. Its function is as follows. Acts as a non-catalytic accessory component of a dynein complex. Part of a complex with bicd-1 and egal-1, which is recruited to the nuclear envelope by unc-83, where in turn, it recruits dynein to the nuclear surface and regulates nuclear migrations in hypodermal precursor cells. Probably within a dynein motor complex, plays a role in the cell fate specification of the germline and oogenesis. In particular, it inhibits germ cell proliferation. Regulates the function and localization of the RNA-binding protein fbf-2 in the germline. Plays a role in mitotic and meiotic processes. Involved in the pairing of homologous chromosomes. Independently of its dynein-mediated functions, plays a role in germ cell apoptosis. This is Dynein light chain 1, cytoplasmic from Caenorhabditis elegans.